Reading from the N-terminus, the 208-residue chain is Small ribosomal subunit protein uS5 (208 aa).

Residues 1–19 (MTDSNNQSPNKKTSGSSGA) are compositionally biased toward polar residues. Residues 1–54 (MTDSNNQSPNKKTSGSSGAPTAADGRQENRRSRGEKRGGRRDRRGQERDSEWQE) are disordered. 2 stretches are compositionally biased toward basic and acidic residues: residues 25 to 37 (GRQE…GEKR) and 44 to 54 (RGQERDSEWQE). Positions 52-115 (WQERVVQIRR…ADGKKHLVRV (64 aa)) constitute an S5 DRBM domain.

Belongs to the universal ribosomal protein uS5 family. As to quaternary structure, part of the 30S ribosomal subunit. Contacts proteins S4 and S8.

Its function is as follows. With S4 and S12 plays an important role in translational accuracy. In terms of biological role, located at the back of the 30S subunit body where it stabilizes the conformation of the head with respect to the body. This Prochlorococcus marinus (strain NATL1A) protein is Small ribosomal subunit protein uS5.